Consider the following 333-residue polypeptide: Taste receptor type 2 member 38 (333 aa).

Residues 1 to 17 are Extracellular-facing; that stretch reads MLTLTRIHTVSYEVRST. The helical transmembrane segment at 18 to 38 threads the bilayer; sequence FLFISVLEFAVGFLTNAFVFL. The Cytoplasmic segment spans residues 39 to 55; sequence VNFWDVVKRQPLSNSDC. A helical membrane pass occupies residues 56–76; it reads VLLCLSISRLFLHGLLFLSAI. Residues 77–94 are Extracellular-facing; that stretch reads QLTHFQKLSEPLNHSYQA. Residues 95–115 form a helical membrane-spanning segment; the sequence is IIMLWMIANQANLWLAACLSL. The Cytoplasmic portion of the chain corresponds to 116-142; the sequence is LYCSKLIRFSHTFLICLASWVSRKISQ. A helical transmembrane segment spans residues 143–163; it reads MLLGIILCSCICTVLCVWCFF. Over 164 to 190 the chain is Extracellular; that stretch reads SRPHFTVTTVLFMNNNTRLNWQIKDLN. An N-linked (GlcNAc...) asparagine glycan is attached at Asn-178. The chain crosses the membrane as a helical span at residues 191 to 211; that stretch reads LFYSFLFCYLWSVPPFLLFLV. Residues 212–251 lie on the Cytoplasmic side of the membrane; that stretch reads SSGMLTVSLGRHMRTMKVYTRDSRDPSLEAHIKALKSLVS. The chain crosses the membrane as a helical span at residues 252–272; it reads FFCFFVISSCAAFISVPLLIL. The Extracellular segment spans residues 273–276; it reads WRDK. Residues 277–297 form a helical membrane-spanning segment; sequence IGVMVCVGIMAACPSGHAAVL. Residues 298-333 lie on the Cytoplasmic side of the membrane; it reads ISGNAKLRRAVTTILLWAQSSLKVRADHKADSRTLC.

The protein belongs to the G-protein coupled receptor T2R family.

It is found in the membrane. In terms of biological role, receptor that may play a role in the perception of bitterness and is gustducin-linked. May play a role in sensing the chemical composition of the gastrointestinal content. The activity of this receptor may stimulate alpha gustducin, mediate PLC-beta-2 activation and lead to the gating of TRPM5. The protein is Taste receptor type 2 member 38 (TAS2R38) of Pan troglodytes (Chimpanzee).